An 89-amino-acid polypeptide reads, in one-letter code: Small ribosomal subunit protein bS20 (89 aa).

It belongs to the bacterial ribosomal protein bS20 family.

Binds directly to 16S ribosomal RNA. The protein is Small ribosomal subunit protein bS20 of Helicobacter pylori (strain ATCC 700392 / 26695) (Campylobacter pylori).